Reading from the N-terminus, the 338-residue chain is 1-aminocyclopropane-1-carboxylate deaminase (338 aa).

Lysine 51 is modified (N6-(pyridoxal phosphate)lysine). Serine 78 (nucleophile) is an active-site residue.

The protein belongs to the ACC deaminase/D-cysteine desulfhydrase family. As to quaternary structure, homotrimer. The cofactor is pyridoxal 5'-phosphate.

The enzyme catalyses 1-aminocyclopropane-1-carboxylate + H2O = 2-oxobutanoate + NH4(+). Its function is as follows. Catalyzes a cyclopropane ring-opening reaction, the irreversible conversion of 1-aminocyclopropane-1-carboxylate (ACC) to ammonia and alpha-ketobutyrate. Allows growth on ACC as a nitrogen source. The chain is 1-aminocyclopropane-1-carboxylate deaminase from Burkholderia cenocepacia (strain ATCC BAA-245 / DSM 16553 / LMG 16656 / NCTC 13227 / J2315 / CF5610) (Burkholderia cepacia (strain J2315)).